A 372-amino-acid chain; its full sequence is Carbamoyl phosphate synthase small chain (372 aa).

The tract at residues 1–184 (MKAYIYLEND…SFQKFNDAKR (184 aa)) is CPSase. Residues Ser45, Gly240, and Gly242 each contribute to the L-glutamine site. In terms of domain architecture, Glutamine amidotransferase type-1 spans 188–372 (KVAVIDYGVK…YIFKEFMNLM (185 aa)). The active-site Nucleophile is Cys268. L-glutamine is bound by residues Leu269, Gln272, Asn310, and Tyr313. Catalysis depends on residues His351 and Glu353.

It belongs to the CarA family. Composed of two chains; the small (or glutamine) chain promotes the hydrolysis of glutamine to ammonia, which is used by the large (or ammonia) chain to synthesize carbamoyl phosphate. Tetramer of heterodimers (alpha,beta)4.

It catalyses the reaction hydrogencarbonate + L-glutamine + 2 ATP + H2O = carbamoyl phosphate + L-glutamate + 2 ADP + phosphate + 2 H(+). The catalysed reaction is L-glutamine + H2O = L-glutamate + NH4(+). It participates in amino-acid biosynthesis; L-arginine biosynthesis; carbamoyl phosphate from bicarbonate: step 1/1. The protein operates within pyrimidine metabolism; UMP biosynthesis via de novo pathway; (S)-dihydroorotate from bicarbonate: step 1/3. Small subunit of the glutamine-dependent carbamoyl phosphate synthetase (CPSase). CPSase catalyzes the formation of carbamoyl phosphate from the ammonia moiety of glutamine, carbonate, and phosphate donated by ATP, constituting the first step of 2 biosynthetic pathways, one leading to arginine and/or urea and the other to pyrimidine nucleotides. The small subunit (glutamine amidotransferase) binds and cleaves glutamine to supply the large subunit with the substrate ammonia. This Campylobacter jejuni subsp. jejuni serotype O:2 (strain ATCC 700819 / NCTC 11168) protein is Carbamoyl phosphate synthase small chain.